The chain runs to 407 residues: Putative F-box protein At5g60560 (407 aa).

An F-box domain is found at 2–49 (TMMSDLSEDLVEEILCRVSITSLGAVRSTCKGWYVLSKTRVLCKAETK).

The sequence is that of Putative F-box protein At5g60560 from Arabidopsis thaliana (Mouse-ear cress).